Consider the following 345-residue polypeptide: Dihydroorotase (345 aa).

The Zn(2+) site is built by His-13 and His-15. Substrate is bound by residues His-15–Arg-17 and Asn-41. 3 residues coordinate Zn(2+): Lys-99, His-136, and His-174. The residue at position 99 (Lys-99) is an N6-carboxylysine. His-136 is a binding site for substrate. Position 219 (Leu-219) interacts with substrate. Asp-247 contacts Zn(2+). Asp-247 is an active-site residue. 2 residues coordinate substrate: His-251 and Ala-263.

Belongs to the metallo-dependent hydrolases superfamily. DHOase family. Class II DHOase subfamily. In terms of assembly, homodimer. It depends on Zn(2+) as a cofactor.

It carries out the reaction (S)-dihydroorotate + H2O = N-carbamoyl-L-aspartate + H(+). Its pathway is pyrimidine metabolism; UMP biosynthesis via de novo pathway; (S)-dihydroorotate from bicarbonate: step 3/3. In terms of biological role, catalyzes the reversible cyclization of carbamoyl aspartate to dihydroorotate. This Agrobacterium fabrum (strain C58 / ATCC 33970) (Agrobacterium tumefaciens (strain C58)) protein is Dihydroorotase.